The following is an 81-amino-acid chain: Short neurotoxin 1 (81 aa).

A signal peptide spans 1 to 21 (MKTLLLTLVVVTIVFLDLGYT). 4 disulfide bridges follow: Cys24–Cys43, Cys38–Cys60, Cys62–Cys73, and Cys74–Cys79.

It belongs to the three-finger toxin family. Short-chain subfamily. Type I alpha-neurotoxin sub-subfamily. As to expression, expressed by the venom gland.

It is found in the secreted. Functionally, binds to muscle nicotinic acetylcholine receptor (nAChR) and inhibit acetylcholine from binding to the receptor, thereby impairing neuromuscular transmission. The sequence is that of Short neurotoxin 1 from Notechis scutatus scutatus (Mainland tiger snake).